The sequence spans 116 residues: Nucleoid-associated protein PMM0020 (116 aa).

The span at Glu-87–Asn-98 shows a compositional bias: basic and acidic residues. Residues Glu-87 to Ser-116 are disordered. Positions Asp-99–Ser-116 are enriched in low complexity.

This sequence belongs to the YbaB/EbfC family. In terms of assembly, homodimer.

The protein resides in the cytoplasm. Its subcellular location is the nucleoid. Functionally, binds to DNA and alters its conformation. May be involved in regulation of gene expression, nucleoid organization and DNA protection. This is Nucleoid-associated protein PMM0020 from Prochlorococcus marinus subsp. pastoris (strain CCMP1986 / NIES-2087 / MED4).